The chain runs to 703 residues: MAGGGRGAGLPAAGEAAKAGRVGVGTTKRARDPSPNSKDPNGVVANLLWRRYSGKVVAEVKASILPYVASTLEAKQVEKGKEEGLTGKTSRERERRKGGFVGVIAAEKKPALQLHGDEKYQKKAGNDPVPPTIDDTSKTGGLHLHGGHVSQSPPDSNALSSQRFGSSSPGGDMKNKTRKRTCTFYAQGRCKNGKSCTFLHEGEVSGSDNQVYGNHGGTGEGSEIQHPSSSKEHQFKNSAGSSQHEIYRTLVHAYGEDNRGLTHPVVKHSCHMLKASHGFKIGGSLTANPTNEVVQLPVVQEKNHEPYFMGHQISLGTNNCLNDMGAYSRLRLDGGKLQFEVAKGDSPRDSHLSRSYLEKNPLKPDYRYQPFDSTISLDPHQYSKKLSAYGGATENLPHKHQEEKSSSHVSYSLNSYTGFRKQGHDSSDFFLVNQSLRATSHHGTLPLHQLTPDKDASHHKGADFDKGGTSRSTLHVSSSSQPVVASAGKLSPIKDEVWITSVPFVPSFNFPDFPGSTSPSKSQYDPLVDSIDPPKVESLNNLKTSNISCSISSQHVDTNVIRGGSLEKPLTFADKLARNVSAKGSNDFGLISYDRGHSSSLDGDNRVKTCERKNDASLNNEKSDFRFHLVEHVKELVKPIWKEGNLSKEAHKLIVKKSVDKIFASLEPNQMPETEKAITTYITASAPKIEKLVKAYVDRYRTS.

Disordered regions lie at residues 1-42 (MAGG…DPNG), 112-176 (LQLH…MKNK), 204-242 (VSGSDNQVYGNHGGTGEGSEIQHPSSSKEHQFKNSAGSS), and 442-481 (HGTLPLHQLTPDKDASHHKGADFDKGGTSRSTLHVSSSSQ). The segment covering 9 to 25 (GLPAAGEAAKAGRVGVG) has biased composition (low complexity). Positions 112 to 125 (LQLHGDEKYQKKAG) are enriched in basic and acidic residues. Positions 149–169 (VSQSPPDSNALSSQRFGSSSP) are enriched in polar residues. A C3H1-type zinc finger spans residues 176 to 203 (KTRKRTCTFYAQGRCKNGKSCTFLHEGE). The span at 451-468 (TPDKDASHHKGADFDKGG) shows a compositional bias: basic and acidic residues. Positions 470–481 (SRSTLHVSSSSQ) are enriched in low complexity.

The sequence is that of Zinc finger CCCH domain-containing protein 36 from Oryza sativa subsp. japonica (Rice).